The chain runs to 370 residues: Anhydro-N-acetylmuramic acid kinase (370 aa).

13–20 (GTSMDGVD) provides a ligand contact to ATP.

Belongs to the anhydro-N-acetylmuramic acid kinase family.

The catalysed reaction is 1,6-anhydro-N-acetyl-beta-muramate + ATP + H2O = N-acetyl-D-muramate 6-phosphate + ADP + H(+). Its pathway is amino-sugar metabolism; 1,6-anhydro-N-acetylmuramate degradation. It participates in cell wall biogenesis; peptidoglycan recycling. Its function is as follows. Catalyzes the specific phosphorylation of 1,6-anhydro-N-acetylmuramic acid (anhMurNAc) with the simultaneous cleavage of the 1,6-anhydro ring, generating MurNAc-6-P. Is required for the utilization of anhMurNAc either imported from the medium or derived from its own cell wall murein, and thus plays a role in cell wall recycling. This Vibrio vulnificus (strain YJ016) protein is Anhydro-N-acetylmuramic acid kinase.